We begin with the raw amino-acid sequence, 284 residues long: Nucleotide-binding protein NGK_0463 (284 aa).

An ATP-binding site is contributed by 8-15 (GLSGSGKS). A GTP-binding site is contributed by 58-61 (DVRS).

It belongs to the RapZ-like family.

In terms of biological role, displays ATPase and GTPase activities. This chain is Nucleotide-binding protein NGK_0463, found in Neisseria gonorrhoeae (strain NCCP11945).